A 465-amino-acid chain; its full sequence is Lactaldehyde dehydrogenase (465 aa).

An NAD(+)-binding site is contributed by Gly-220–Gly-225. Catalysis depends on residues Glu-240 and Cys-274.

The protein belongs to the aldehyde dehydrogenase family. Homotetramer.

The enzyme catalyses (S)-lactaldehyde + NAD(+) + H2O = (S)-lactate + NADH + 2 H(+). Its pathway is cofactor biosynthesis; coenzyme F420 biosynthesis. In terms of biological role, involved in F420 biosynthesis through the oxidation of lactaldehyde to lactate. The protein is Lactaldehyde dehydrogenase of Methanococcus maripaludis (strain C5 / ATCC BAA-1333).